Consider the following 565-residue polypeptide: Heme/hemopexin transporter protein HuxB (565 aa).

An N-terminal signal peptide occupies residues 1–26 (MKMRPRYSVIASAVSLGFVLSKSVMA). Residues 73–150 (FPLTQVQILD…GTVKILLLKG (78 aa)) form the POTRA domain.

The protein belongs to the TPS (TC 1.B.20) family.

The protein localises to the cell outer membrane. Likely functions in the release of soluble HxuA from the cell. Functionally, probable member of a two partner secretion pathway (TPS) in which it mediates the secretion of HuxA. This Haemophilus influenzae (strain 86-028NP) protein is Heme/hemopexin transporter protein HuxB (hxuB).